Consider the following 164-residue polypeptide: Putative deoxyuridine 5'-triphosphate nucleotidohydrolase (164 aa).

65–67 (RSG) provides a ligand contact to substrate. Lys71 carries the post-translational modification N6-acetyllysine; by host. Substrate contacts are provided by residues 79 to 82 (GVVD), Gly90, and 138 to 139 (YG).

It belongs to the dUTPase family. Mg(2+) is required as a cofactor.

It catalyses the reaction dUTP + H2O = dUMP + diphosphate + H(+). This enzyme is involved in nucleotide metabolism: it produces dUMP, the immediate precursor of thymidine nucleotides and it decreases the intracellular concentration of dUTP so that uracil cannot be incorporated into DNA. In Dryophytes versicolor (chameleon treefrog), this protein is Putative deoxyuridine 5'-triphosphate nucleotidohydrolase.